Here is a 365-residue protein sequence, read N- to C-terminus: DNA replication and repair protein RecF (365 aa).

Residue 30-37 (GPNGSGKT) participates in ATP binding.

The protein belongs to the RecF family.

Its subcellular location is the cytoplasm. Its function is as follows. The RecF protein is involved in DNA metabolism; it is required for DNA replication and normal SOS inducibility. RecF binds preferentially to single-stranded, linear DNA. It also seems to bind ATP. This Azotobacter vinelandii (strain DJ / ATCC BAA-1303) protein is DNA replication and repair protein RecF.